Here is a 357-residue protein sequence, read N- to C-terminus: 5-hydroxytryptamine receptor 5A (357 aa).

At 1–36 (MDLPINLTSFSLSTPSTLEPNRSLDTEALRTSQSFL) the chain is on the extracellular side. N-linked (GlcNAc...) asparagine glycosylation is found at N6 and N21. Residues 37–63 (SAFRVLVLTLLGFLAAATFTWNLLVLA) traverse the membrane as a helical segment. At 64 to 76 (TILRVRTFHRVPH) the chain is on the cytoplasmic side. The helical transmembrane segment at 77 to 103 (NLVASMAISDVLVAVLVMPLSLVHELS) threads the bilayer. Over 104 to 114 (GRRWQLGRRLC) the chain is Extracellular. A disulfide bond links C114 and C192. Residues 115–137 (QLWIACDVLCCTASIWNVTAIAL) form a helical membrane-spanning segment. D121 lines the serotonin pocket. The Cytoplasmic segment spans residues 138 to 155 (DRYWSITRHLEYTLRARK). The helical transmembrane segment at 156–176 (RVSNVMILLTWALSAVISLAP) threads the bilayer. The Extracellular portion of the chain corresponds to 177–198 (LLFGWGETYSELSEECQVSREP). Residues 199-220 (SYTVFSTVGAFYLPLCVVLFVY) form a helical membrane-spanning segment. At 221 to 287 (WKIYKAAKFR…QKEQRAALMV (67 aa)) the chain is on the cytoplasmic side. A helical transmembrane segment spans residues 288 to 312 (GILIGVFVLCWFPFFVTELISPLCS). At 313–314 (WD) the chain is on the extracellular side. The helical transmembrane segment at 315–339 (IPALWKSIFLWLGYSNSFFNPLIYT) threads the bilayer. Residues 340–357 (AFNRSYSSAFKVFFSKQQ) lie on the Cytoplasmic side of the membrane.

The protein belongs to the G-protein coupled receptor 1 family. As to expression, central nervous system.

Its subcellular location is the cell membrane. G-protein coupled receptor for 5-hydroxytryptamine (serotonin), a biogenic hormone that functions as a neurotransmitter, a hormone and a mitogen. Also functions as a receptor for ergot alkaloid derivatives and other psychoactive substances. Ligand binding causes a conformation change that triggers signaling via guanine nucleotide-binding proteins (G proteins) and modulates the activity of downstream effectors. Htr5a is coupled to G(i)/G(o) G alpha proteins and mediates inhibitory neurotransmission: signaling inhibits adenylate cyclase activity and activates a phosphatidylinositol-calcium second messenger system that regulates the release of Ca(2+) ions from intracellular stores. In Rattus norvegicus (Rat), this protein is 5-hydroxytryptamine receptor 5A.